The primary structure comprises 340 residues: Major histocompatibility complex class I-related protein 1 (340 aa).

A signal peptide spans Met1–Ser22. Residues Arg23–Ser109 are alpha-1. An antigen-binding cleft region spans residues Arg23–Thr201. Residues Arg23–Met302 lie on the Extracellular side of the membrane. 8-(9H-purin-6-yl)-2-oxa-8-azabicyclo[3.3.1]nona-3,6-diene-4,6-dicarbaldehyde is bound by residues Tyr29 and Arg31. The 5-(2-oxoethylideneamino)-6-(D-ribitylamino)uracil site is built by Arg31, Ser46, and Lys65. Arg31, Ser46, and Lys65 together coordinate 5-(2-oxopropylideneamino)-6-(D-ribitylamino)uracil. Residues Arg31, Ser46, and Lys65 each coordinate 7-hydroxy-6-methyl-8-(1-D-ribityl)lumazine. 8-(9H-purin-6-yl)-2-oxa-8-azabicyclo[3.3.1]nona-3,6-diene-4,6-dicarbaldehyde is bound by residues Lys65 and His80. A 2-amino-4-oxopteridine-6-carbaldehyde-binding site is contributed by Lys65. Lys65 is a binding site for pyridoxal. Residue Asn107 is glycosylated (N-linked (GlcNAc...) asparagine). The interval Gly110 to Thr201 is alpha-2. Arg116 provides a ligand contact to 8-(9H-purin-6-yl)-2-oxa-8-azabicyclo[3.3.1]nona-3,6-diene-4,6-dicarbaldehyde. Arg116, Tyr174, and Gln175 together coordinate 5-(2-oxoethylideneamino)-6-(D-ribitylamino)uracil. 5-(2-oxopropylideneamino)-6-(D-ribitylamino)uracil-binding residues include Arg116, Tyr174, and Gln175. Residues Arg116, Tyr174, and Gln175 each contribute to the 7-hydroxy-6-methyl-8-(1-D-ribityl)lumazine site. Intrachain disulfides connect Cys120–Cys183 and Cys222–Cys278. The tract at residues Glu202–Gln293 is alpha-3. Residues Pro203–His282 enclose the Ig-like C1-type domain. The tract at residues Glu294–Met302 is connecting peptide. A helical membrane pass occupies residues Lys303–Trp323. Over Arg324–Asp340 the chain is Cytoplasmic.

Belongs to the MHC class I family. Heterotrimer that consists of MR1, B2M and metabolite antigen. Major classes of metabolite ligands presented by MR1 include riboflavin-related antigens, pyrimidines and ribityl lumazines, nucleobase adducts and folate derivatives. Forms reversible covalent Schiff base complexes with microbial pyrimidine-based metabolite, which serves as a molecular switch triggering complete folding, stable association with B2M and translocation of the ternary complex from endoplasmic reticulum to the plasma membrane. Alternatively, forms non-Schiff base complexes with ribityl lumazines. On antigen-presenting cells, the ternary complex interacts with TCR on MR1-restricted T cells. Interacts with TAPBP and TAPBPL chaperones in the endoplasmic reticulum. TAPBP associated or not with MHC class I peptide loading complex binds ligand-free MR1 or MR1-B2M complex, providing for stable MR1 pools ready for metabolite antigen processing. TAPBPL interacts with MR1 in a ligand-independent way; this interaction may stabilize MR1 pool and facilitate ligand loading and dissociation. Structurally, MR1-B2M heterodimer adopts a topology similar to classical MHC class I molecules, with alpha-1 and alpha-2 domains of MR1 forming the antigen-binding cleft composed of two alpha-helices resting on a floor of 7-stranded anti-parallel beta-pleated sheet. MR1-B2M heterodimer (via alpha-helices) interacts with TCR (via CDR domains). N-glycosylated.

It is found in the cell membrane. It localises to the endoplasmic reticulum membrane. The protein resides in the golgi apparatus membrane. Its subcellular location is the early endosome membrane. The protein localises to the late endosome membrane. In terms of biological role, antigen-presenting molecule specialized in displaying microbial pyrimidine-based metabolites to alpha-beta T cell receptors (TCR) on innate-type mucosal-associated invariant T (MAIT) cells. In complex with B2M preferentially presents riboflavin-derived metabolites to semi-invariant TCRs on MAIT cells, guiding immune surveillance of the microbial metabolome at mucosal epithelial barriers. Signature pyrimidine-based microbial antigens are generated via non-enzymatic condensation of metabolite intermediates of the riboflavin pathway with by-products arising from other metabolic pathways such as glycolysis. Typical potent antigenic metabolites are 5-(2-oxoethylideneamino)-6-D-ribitylaminouracil (5-OE-RU) and 5-(2-oxopropylideneamino)-6-D-ribitylaminouracil (5-OP-RU), products of condensation of 5-amino-6-D-ribityaminouracil (5-A-RU) with glyoxal or methylglyoxal by-products, respectively. May present microbial antigens to various MAIT cell subsets, providing for unique recognition of diverse microbes, including pathogens that do not synthesize riboflavin. Upon antigen recognition, elicits rapid innate-type MAIT cell activation to eliminate pathogenic microbes by directly killing infected cells. During T cell development, drives thymic selection and post-thymic terminal differentiation of MAIT cells in a process dependent on commensal microflora. Acts as an immune sensor of cancer cell metabolome. May present a tumor-specific or -associated metabolite essential for cancer cell survival to a pan-cancer TCR on a non-MAIT CD8-positive T cell clone, triggering T cell-mediated killing of a wide range of cancer cell types. May present tumor-enriched pyridoxal and pyridoxal 5'-phosphate antigens, enabling preferential recognition of cancer cells. Presents nucleobase carbonyl adducts generated during oxidative stress. Captures M3Ade, a nucleobase adduct composed of one adenine modified by a malondialdehyde trimer, for recognition by MR1-restricted T cell clones expressing a polyclonal TCR repertoire. This Pongo abelii (Sumatran orangutan) protein is Major histocompatibility complex class I-related protein 1.